A 615-amino-acid chain; its full sequence is 1-deoxy-D-xylulose-5-phosphate synthase (615 aa).

Thiamine diphosphate-binding positions include histidine 76 and 117–119 (GHS). Aspartate 148 provides a ligand contact to Mg(2+). Residues 149 to 150 (GA), asparagine 177, tyrosine 284, and glutamate 365 contribute to the thiamine diphosphate site. Asparagine 177 serves as a coordination point for Mg(2+).

It belongs to the transketolase family. DXPS subfamily. In terms of assembly, homodimer. Mg(2+) serves as cofactor. The cofactor is thiamine diphosphate.

The enzyme catalyses D-glyceraldehyde 3-phosphate + pyruvate + H(+) = 1-deoxy-D-xylulose 5-phosphate + CO2. It functions in the pathway metabolic intermediate biosynthesis; 1-deoxy-D-xylulose 5-phosphate biosynthesis; 1-deoxy-D-xylulose 5-phosphate from D-glyceraldehyde 3-phosphate and pyruvate: step 1/1. Its function is as follows. Catalyzes the acyloin condensation reaction between C atoms 2 and 3 of pyruvate and glyceraldehyde 3-phosphate to yield 1-deoxy-D-xylulose-5-phosphate (DXP). The polypeptide is 1-deoxy-D-xylulose-5-phosphate synthase (Francisella tularensis subsp. mediasiatica (strain FSC147)).